The primary structure comprises 122 residues: MKYLLIALGGGTGSLARYLLGTAITSRVGARFPIGTMVVNVSGCFAIGLAMTLLTERLQPHPYWRLALVVGFLGGYTTFSSFEWETYAAVREGGFWIGLANVLGSVTLGYAAVWFGALLARR.

The next 4 helical transmembrane spans lie at 4 to 24, 34 to 54, 66 to 86, and 95 to 115; these read LLIA…GTAI, IGTM…MTLL, LALV…EWET, and FWIG…AVWF. Na(+) contacts are provided by G74 and T77.

This sequence belongs to the fluoride channel Fluc/FEX (TC 1.A.43) family.

The protein localises to the cell inner membrane. The enzyme catalyses fluoride(in) = fluoride(out). Na(+) is not transported, but it plays an essential structural role and its presence is essential for fluoride channel function. Fluoride-specific ion channel. Important for reducing fluoride concentration in the cell, thus reducing its toxicity. The sequence is that of Fluoride-specific ion channel FluC from Solibacter usitatus (strain Ellin6076).